Reading from the N-terminus, the 72-residue chain is Translation initiation factor IF-1 (72 aa).

Residues 1 to 72 (MSKSDIIEMQ…TRGRITWRAK (72 aa)) enclose the S1-like domain.

The protein belongs to the IF-1 family. As to quaternary structure, component of the 30S ribosomal translation pre-initiation complex which assembles on the 30S ribosome in the order IF-2 and IF-3, IF-1 and N-formylmethionyl-tRNA(fMet); mRNA recruitment can occur at any time during PIC assembly.

The protein resides in the cytoplasm. Its function is as follows. One of the essential components for the initiation of protein synthesis. Stabilizes the binding of IF-2 and IF-3 on the 30S subunit to which N-formylmethionyl-tRNA(fMet) subsequently binds. Helps modulate mRNA selection, yielding the 30S pre-initiation complex (PIC). Upon addition of the 50S ribosomal subunit IF-1, IF-2 and IF-3 are released leaving the mature 70S translation initiation complex. The sequence is that of Translation initiation factor IF-1 from Clostridium perfringens (strain 13 / Type A).